The chain runs to 238 residues: Uridylate kinase (238 aa).

10–13 is an ATP binding site; that stretch reads KFSG. The interval 18 to 23 is involved in allosteric activation by GTP; the sequence is GDSGFG. Glycine 52 lines the UMP pocket. Glycine 53 and arginine 57 together coordinate ATP. Residues aspartate 73 and 134 to 141 each bind UMP; that span reads TGNPFFTT. The ATP site is built by threonine 161, tyrosine 167, and aspartate 170.

The protein belongs to the UMP kinase family. As to quaternary structure, homohexamer.

Its subcellular location is the cytoplasm. It carries out the reaction UMP + ATP = UDP + ADP. It functions in the pathway pyrimidine metabolism; CTP biosynthesis via de novo pathway; UDP from UMP (UMPK route): step 1/1. Allosterically activated by GTP. Inhibited by UTP. Catalyzes the reversible phosphorylation of UMP to UDP. The protein is Uridylate kinase of Campylobacter curvus (strain 525.92).